The primary structure comprises 221 residues: MALVVEDIVKNFGEGLSETKVLKGINFEVEQGEFVILNGASGSGKTTLLTILGGLLSQTSGTVLYNDTPLFDKQHRPSDLRLEDIGFIFQSSHLVPYLKVIEQLTLVGQEAGMTKQQSSKRAIQLLKNIGLEDRLNVYPHQLSGGEKQRVAIMRAFMNNPKIILADEPTASLDADRATKVVEMIRQQIKEQQMIGIMITHDRRLFEYADRVIELEDGKITD.

Residues 3 to 221 (LVVEDIVKNF…IELEDGKITD (219 aa)) form the ABC transporter domain. ATP is bound at residue 39-46 (GASGSGKT).

This sequence belongs to the ABC transporter superfamily. HrtA family. In terms of assembly, the complex is composed of two ATP-binding proteins (HrtA), two transmembrane proteins (HrtB) and a solute-binding protein.

Its subcellular location is the cell membrane. In terms of biological role, part of the ABC transporter complex hrt involved in hemin import. Responsible for energy coupling to the transport system. The sequence is that of Putative hemin import ATP-binding protein HrtA (hrtA) from Staphylococcus aureus (strain bovine RF122 / ET3-1).